Reading from the N-terminus, the 232-residue chain is Mediator of RNA polymerase II transcription subunit 18 (232 aa).

It belongs to the Mediator complex subunit 18 family. In terms of assembly, component of the Mediator complex.

It is found in the nucleus. Its function is as follows. Component of the Mediator complex, a coactivator involved in the regulated transcription of nearly all RNA polymerase II-dependent genes. Mediator functions as a bridge to convey information from gene-specific regulatory proteins to the basal RNA polymerase II transcription machinery. Mediator is recruited to promoters by direct interactions with regulatory proteins and serves as a scaffold for the assembly of a functional preinitiation complex with RNA polymerase II and the general transcription factors. The polypeptide is Mediator of RNA polymerase II transcription subunit 18 (mdt-18) (Caenorhabditis elegans).